The primary structure comprises 714 residues: Cyclomaltodextrin glucanotransferase (714 aa).

Positions 1–27 (MKSRYKRLTSLALSLSMALGISLPAWA) are cleaved as a signal peptide. The tract at residues 28–165 (SPDTSVDNKV…NIKVVIDFAP (138 aa)) is A1. Ca(2+) contacts are provided by aspartate 54, asparagine 59, asparagine 60, glycine 78, and aspartate 80. Residue 127–128 (YW) participates in substrate binding. Asparagine 166 lines the Ca(2+) pocket. Residues 166–229 (NHTSPADRDN…NLYDLADINH (64 aa)) form a b region. Residue histidine 167 participates in substrate binding. Position 217 (isoleucine 217) interacts with Ca(2+). 220 to 223 (NLYD) is a substrate binding site. Residue aspartate 226 participates in Ca(2+) binding. Residues 230–434 (NNNAMDAYFK…LRKSNPAIAY (205 aa)) form an A2 region. Arginine 254 contacts substrate. The active-site Nucleophile is the aspartate 256. 259–260 (KH) contacts substrate. Histidine 260 provides a ligand contact to Ca(2+). Glutamate 285 serves as the catalytic Proton donor. Positions 355, 399, and 403 each coordinate substrate. The c stretch occupies residues 435 to 523 (GTTTERWVNN…GTAVWQYTAP (89 aa)). Positions 524 to 610 (ETSPAIGNVG…SNTFKSFNVL (87 aa)) are d. Positions 527–607 (PAIGNVGPTM…GTASNTFKSF (81 aa)) constitute an IPT/TIG domain. In terms of domain architecture, CBM20 spans 609–714 (VLTGDQVTVR…VGTVTVDWQN (106 aa)). An e region spans residues 611–714 (TGDQVTVRFL…VGTVTVDWQN (104 aa)).

It belongs to the glycosyl hydrolase 13 family. As to quaternary structure, monomer. It depends on Ca(2+) as a cofactor.

The protein resides in the secreted. It catalyses the reaction Cyclizes part of a (1-&gt;4)-alpha-D-glucan chain by formation of a (1-&gt;4)-alpha-D-glucosidic bond.. The polypeptide is Cyclomaltodextrin glucanotransferase (cgtM) (Paenibacillus macerans (Bacillus macerans)).